A 223-amino-acid chain; its full sequence is MSDICDANKLKYRFRGYFPVVIDVETAGFNSQTDALLEIAVTLLKMDNEGVIGIDKTLHFHIEPFEGANLEPEALAFNGIDPTNPLRGAVSEKEAFLEIFKAVKKAQKASDCHRSIIVAHNAAFDHGFVSKAIERCDLKRSPFHPFATFDTATLAGLAIGHTVLAKACIMAGIPFDNKEAHSALYDTERTAELFCHIVNRWKSLGGWPLLAVDEQDAQSDTEA.

An Exonuclease domain is found at 20-194 (VVIDVETAGF…YDTERTAELF (175 aa)). Residues Asp-23, Glu-25, His-181, and Asp-186 each coordinate Mg(2+). His-181 acts as the Proton donor/acceptor in catalysis.

It belongs to the RNase T family. In terms of assembly, homodimer. Requires Mg(2+) as cofactor.

Trims short 3' overhangs of a variety of RNA species, leaving a one or two nucleotide 3' overhang. Responsible for the end-turnover of tRNA: specifically removes the terminal AMP residue from uncharged tRNA (tRNA-C-C-A). Also appears to be involved in tRNA biosynthesis. This Shewanella baltica (strain OS155 / ATCC BAA-1091) protein is Ribonuclease T.